The primary structure comprises 314 residues: MKKIAFIGECMIELNGKPFAEMWQSYGGDTLNSATYLSRVSSSKEIQVHYVSALGTDNLSKQMLKYWQADGIQTNWVLQDEQHQPGLYLIQLDAQGERTFLYWRNQSAARYMVQHPDFAKVIAELQQVDVIYLSGISLAILPKNDRTFLIEQLSSLAKKGTEIVFDSNYRPKLWDSLEEAQDCYLQLLPSVNIALVTFDDEQALWKDKTSRDTLERLHKIGIPKVIVKCGKNGAIFSDRYLSQYGQVIPEPILNVVDTTSAGDSFNAGFLNGYLRNKSLEICCQQGNRIAGIVIQHKGAIIDKVAISHLQSEFN.

Substrate is bound by residues Gly28–Asn32, Tyr88, Tyr102–Arg104, and Arg170. Residues Asn168–Arg170, Lys228–Gly233, and Ser260–Asp263 contribute to the ATP site. Residue Asp263 participates in substrate binding. Asp263 (proton acceptor) is an active-site residue.

This sequence belongs to the carbohydrate kinase PfkB family.

It catalyses the reaction 2-dehydro-3-deoxy-D-gluconate + ATP = 2-dehydro-3-deoxy-6-phospho-D-gluconate + ADP + H(+). It functions in the pathway carbohydrate acid metabolism; 2-dehydro-3-deoxy-D-gluconate degradation; D-glyceraldehyde 3-phosphate and pyruvate from 2-dehydro-3-deoxy-D-gluconate: step 1/2. Functionally, catalyzes the phosphorylation of 2-keto-3-deoxygluconate (KDG) to produce 2-keto-3-deoxy-6-phosphogluconate (KDPG). The chain is 2-dehydro-3-deoxygluconokinase (kdgK) from Haemophilus influenzae (strain ATCC 51907 / DSM 11121 / KW20 / Rd).